Consider the following 826-residue polypeptide: Beta-galactosidase 7 (826 aa).

Positions 1-25 (MKMKHFTRLLSLFFILITSLSLAKS) are cleaved as a signal peptide. N-linked (GlcNAc...) asparagine glycosylation occurs at asparagine 154. Glutamate 184 (proton donor) is an active-site residue. Glutamate 253 serves as the catalytic Nucleophile. 8 N-linked (GlcNAc...) asparagine glycosylation sites follow: asparagine 254, asparagine 351, asparagine 380, asparagine 491, asparagine 665, asparagine 706, asparagine 797, and asparagine 801. The SUEL-type lectin domain occupies 740-826 (AHEHNKVELS…PKKLAVELEC (87 aa)).

The protein belongs to the glycosyl hydrolase 35 family. Expressed in flowers.

The protein localises to the secreted. It localises to the extracellular space. Its subcellular location is the apoplast. It catalyses the reaction Hydrolysis of terminal non-reducing beta-D-galactose residues in beta-D-galactosides.. This is Beta-galactosidase 7 (BGAL7) from Arabidopsis thaliana (Mouse-ear cress).